The chain runs to 604 residues: Aspartate--tRNA(Asp/Asn) ligase (604 aa).

Residue Glu175 coordinates L-aspartate. The tract at residues 199–202 (QQFK) is aspartate. 2 residues coordinate L-aspartate: Arg221 and His456. 221–223 (RDE) contributes to the ATP binding site. Position 496 (Glu496) interacts with ATP. Arg503 contacts L-aspartate. Residue 548–551 (GVDR) participates in ATP binding.

The protein belongs to the class-II aminoacyl-tRNA synthetase family. Type 1 subfamily. In terms of assembly, homodimer.

The protein localises to the cytoplasm. The enzyme catalyses tRNA(Asx) + L-aspartate + ATP = L-aspartyl-tRNA(Asx) + AMP + diphosphate. Its function is as follows. Aspartyl-tRNA synthetase with relaxed tRNA specificity since it is able to aspartylate not only its cognate tRNA(Asp) but also tRNA(Asn). Reaction proceeds in two steps: L-aspartate is first activated by ATP to form Asp-AMP and then transferred to the acceptor end of tRNA(Asp/Asn). The sequence is that of Aspartate--tRNA(Asp/Asn) ligase from Methylobacterium sp. (strain 4-46).